We begin with the raw amino-acid sequence, 95 residues long: UPF0473 protein CD630_12860 (95 aa).

Belongs to the UPF0473 family.

The sequence is that of UPF0473 protein CD630_12860 from Clostridioides difficile (strain 630) (Peptoclostridium difficile).